A 151-amino-acid chain; its full sequence is Copper transporter 2 (151 aa).

Helical transmembrane passes span 42-62 and 97-117; these read GARG…AVLL and VAYL…LAIV.

Belongs to the copper transporter (Ctr) (TC 1.A.56) family. SLC31A subfamily. As to quaternary structure, self-interacts. Interacts with SWEET11 and COPT1.

The protein localises to the cell membrane. Its function is as follows. Involved in the transport of copper, in cooperation with SWEET11 and COPT1. Contributes to the removal of copper (Cu) from xylem, and thus to the sensitivity toward bacterial pathogens such as X.oryzae pv. oryzae (Xoo). In Oryza sativa subsp. japonica (Rice), this protein is Copper transporter 2 (COPT2).